We begin with the raw amino-acid sequence, 442 residues long: tRNA-2-methylthio-N(6)-dimethylallyladenosine synthase (442 aa).

In terms of domain architecture, MTTase N-terminal spans K5 to K122. [4Fe-4S] cluster contacts are provided by C14, C51, C85, C159, C163, and C166. A Radical SAM core domain is found at K145–I378. The TRAM domain occupies R380–I442.

The protein belongs to the methylthiotransferase family. MiaB subfamily. Monomer. [4Fe-4S] cluster is required as a cofactor.

It localises to the cytoplasm. The catalysed reaction is N(6)-dimethylallyladenosine(37) in tRNA + (sulfur carrier)-SH + AH2 + 2 S-adenosyl-L-methionine = 2-methylsulfanyl-N(6)-dimethylallyladenosine(37) in tRNA + (sulfur carrier)-H + 5'-deoxyadenosine + L-methionine + A + S-adenosyl-L-homocysteine + 2 H(+). Catalyzes the methylthiolation of N6-(dimethylallyl)adenosine (i(6)A), leading to the formation of 2-methylthio-N6-(dimethylallyl)adenosine (ms(2)i(6)A) at position 37 in tRNAs that read codons beginning with uridine. This is tRNA-2-methylthio-N(6)-dimethylallyladenosine synthase from Francisella tularensis subsp. tularensis (strain FSC 198).